Consider the following 516-residue polypeptide: Putative thymidine phosphorylase (516 aa).

Belongs to the thymidine/pyrimidine-nucleoside phosphorylase family. Type 2 subfamily.

It catalyses the reaction thymidine + phosphate = 2-deoxy-alpha-D-ribose 1-phosphate + thymine. This is Putative thymidine phosphorylase from Methylococcus capsulatus (strain ATCC 33009 / NCIMB 11132 / Bath).